The sequence spans 866 residues: DNA replication licensing factor MCM4 (866 aa).

3 disordered regions span residues 1–67 (MSSP…TSPA), 81–107 (SPLN…TPLR), and 124–145 (GGGS…PVSE). Polar residues-rich tracts occupy residues 47–63 (DNIS…SLPA) and 81–93 (SPLN…SMGS). 2 positions are modified to phosphoserine: Ser55 and Ser81. Residue Thr87 is modified to Phosphothreonine. An MCM domain is found at 460–669 (IYDRLARAIA…FDKRLASHLV (210 aa)). Residue 512 to 519 (GDPGTSKS) participates in ATP binding. Positions 644–647 (SRFD) match the Arginine finger motif.

It belongs to the MCM family. Component of the Mcm2-7 complex. The complex forms a toroidal hexameric ring with the proposed subunit order Mcm2-Mcm6-Mcm4-Mcm7-Mcm3-Mcm5. In terms of processing, phosphorylated by the catalytic component of the Dbf4-dependent kinase (DDK) complex Cdc7.

It localises to the nucleus. It carries out the reaction ATP + H2O = ADP + phosphate + H(+). Its function is as follows. Acts as a component of the Mcm2-7 complex (Mcm complex) which is the putative replicative helicase essential for 'once per cell cycle' DNA replication initiation and elongation in eukaryotic cells. The active ATPase sites in the Mcm2-7 ring are formed through the interaction surfaces of two neighboring subunits such that a critical structure of a conserved arginine finger motif is provided in trans relative to the ATP-binding site of the Walker A box of the adjacent subunit. The six ATPase active sites, however, are likely to contribute differentially to the complex helicase activity. Required for DNA replication and cell proliferation. Essential role in mitotic DNA replication but not in endoreplication. This Drosophila melanogaster (Fruit fly) protein is DNA replication licensing factor MCM4 (dpa).